The primary structure comprises 205 residues: Thymidylate kinase (205 aa).

10-17 (GIDGAGKT) serves as a coordination point for ATP.

It belongs to the thymidylate kinase family.

The catalysed reaction is dTMP + ATP = dTDP + ADP. Functionally, phosphorylation of dTMP to form dTDP in both de novo and salvage pathways of dTTP synthesis. The polypeptide is Thymidylate kinase (Nitrosospira multiformis (strain ATCC 25196 / NCIMB 11849 / C 71)).